Consider the following 184-residue polypeptide: dITP/XTP pyrophosphatase (184 aa).

8–13 is a substrate binding site; the sequence is TGNKGK. Mg(2+)-binding residues include E37 and D66. D66 (proton acceptor) is an active-site residue. Substrate contacts are provided by residues S67, 142–145, K163, and 168–169; these read FGYD and HR.

Belongs to the HAM1 NTPase family. Homodimer. Requires Mg(2+) as cofactor.

It catalyses the reaction XTP + H2O = XMP + diphosphate + H(+). The catalysed reaction is dITP + H2O = dIMP + diphosphate + H(+). The enzyme catalyses ITP + H2O = IMP + diphosphate + H(+). Functionally, pyrophosphatase that catalyzes the hydrolysis of nucleoside triphosphates to their monophosphate derivatives, with a high preference for the non-canonical purine nucleotides XTP (xanthosine triphosphate), dITP (deoxyinosine triphosphate) and ITP. Seems to function as a house-cleaning enzyme that removes non-canonical purine nucleotides from the nucleotide pool, thus preventing their incorporation into DNA/RNA and avoiding chromosomal lesions. This chain is dITP/XTP pyrophosphatase, found in Methanosarcina mazei (strain ATCC BAA-159 / DSM 3647 / Goe1 / Go1 / JCM 11833 / OCM 88) (Methanosarcina frisia).